Here is a 73-residue protein sequence, read N- to C-terminus: Large ribosomal subunit protein bL28 (73 aa).

Belongs to the bacterial ribosomal protein bL28 family.

This Anaeromyxobacter dehalogenans (strain 2CP-1 / ATCC BAA-258) protein is Large ribosomal subunit protein bL28.